We begin with the raw amino-acid sequence, 462 residues long: Argininosuccinate lyase (462 aa).

The protein belongs to the lyase 1 family. Argininosuccinate lyase subfamily.

It is found in the cytoplasm. It catalyses the reaction 2-(N(omega)-L-arginino)succinate = fumarate + L-arginine. The protein operates within amino-acid biosynthesis; L-arginine biosynthesis; L-arginine from L-ornithine and carbamoyl phosphate: step 3/3. The sequence is that of Argininosuccinate lyase from Dechloromonas aromatica (strain RCB).